The chain runs to 344 residues: UDP-3-O-acylglucosamine N-acyltransferase (344 aa).

Histidine 236 functions as the Proton acceptor in the catalytic mechanism.

The protein belongs to the transferase hexapeptide repeat family. LpxD subfamily. Homotrimer.

It catalyses the reaction a UDP-3-O-[(3R)-3-hydroxyacyl]-alpha-D-glucosamine + a (3R)-hydroxyacyl-[ACP] = a UDP-2-N,3-O-bis[(3R)-3-hydroxyacyl]-alpha-D-glucosamine + holo-[ACP] + H(+). It participates in bacterial outer membrane biogenesis; LPS lipid A biosynthesis. Catalyzes the N-acylation of UDP-3-O-acylglucosamine using 3-hydroxyacyl-ACP as the acyl donor. Is involved in the biosynthesis of lipid A, a phosphorylated glycolipid that anchors the lipopolysaccharide to the outer membrane of the cell. This Nitratidesulfovibrio vulgaris (strain ATCC 29579 / DSM 644 / CCUG 34227 / NCIMB 8303 / VKM B-1760 / Hildenborough) (Desulfovibrio vulgaris) protein is UDP-3-O-acylglucosamine N-acyltransferase.